Here is a 184-residue protein sequence, read N- to C-terminus: Large ribosomal subunit protein uL6 (184 aa).

The protein belongs to the universal ribosomal protein uL6 family. Part of the 50S ribosomal subunit.

Functionally, this protein binds to the 23S rRNA, and is important in its secondary structure. It is located near the subunit interface in the base of the L7/L12 stalk, and near the tRNA binding site of the peptidyltransferase center. The polypeptide is Large ribosomal subunit protein uL6 (Methanosphaera stadtmanae (strain ATCC 43021 / DSM 3091 / JCM 11832 / MCB-3)).